The following is a 426-amino-acid chain: GTPase HflX (426 aa).

The Hflx-type G domain occupies 198-365; it reads PTVSLVGYTN…ALTERLSGEV (168 aa). GTP contacts are provided by residues 204–211, 229–233, 251–254, 317–320, and 343–345; these read GYTNAGKS, FATLD, DTVG, NKID, and SAQ. Mg(2+)-binding residues include S211 and T231.

The protein belongs to the TRAFAC class OBG-HflX-like GTPase superfamily. HflX GTPase family. As to quaternary structure, monomer. Associates with the 50S ribosomal subunit. This interaction occurs in the presence of GTP, GDP, ATP or ADP, but not in their absence. Mg(2+) serves as cofactor.

The protein resides in the cytoplasm. Its activity is regulated as follows. Intrinsic GTPase activity is very slow and can be stimulated by the presence of 50S ribosomal subunits or 70S ribosomes. GTPase activity is inhibited by ATP. Its function is as follows. GTPase that associates with the 50S ribosomal subunit and may have a role during protein synthesis or ribosome biogenesis. In vitro, also exhibits ATPase activity. In Escherichia coli (strain K12), this protein is GTPase HflX.